A 479-amino-acid chain; its full sequence is UDP-glycosyltransferase 71B6 (479 aa).

UDP-alpha-D-glucose is bound by residues Ser275, 342-344, 359-367, and 381-384; these read AEQ, HGGWNSTLE, and YAEQ.

It belongs to the UDP-glycosyltransferase family.

Glucosyltransferase that glucosylates the (+) enantiomer of abscisic acid ((+)-ABA). Is not active on structural analogs with alterations to the 8'- and 9'- methyl groups. This is UDP-glycosyltransferase 71B6 (UGT71B6) from Arabidopsis thaliana (Mouse-ear cress).